The primary structure comprises 534 residues: Ethanolamine kinase (534 aa).

Phosphoserine is present on serine 23.

It belongs to the choline/ethanolamine kinase family.

The protein resides in the cytoplasm. It catalyses the reaction ethanolamine + ATP = phosphoethanolamine + ADP + H(+). The enzyme catalyses choline + ATP = phosphocholine + ADP + H(+). It participates in phospholipid metabolism; phosphatidylethanolamine biosynthesis; phosphatidylethanolamine from ethanolamine: step 1/3. Functionally, catalyzes the committed step of phosphatidylethanolamine synthesis via the CDP-ethanolamine branch of the Kennedy pathway. Also exhibits choline kinase activity, thus contributing to phosphatidylcholine synthesis via the CDP-choline pathway, but its preferred substrate is ethanolamine. In Saccharomyces cerevisiae (strain ATCC 204508 / S288c) (Baker's yeast), this protein is Ethanolamine kinase (EKI1).